The primary structure comprises 70 residues: Conotoxin ArMKLT2-0112 (70 aa).

The first 22 residues, M1–G22, serve as a signal peptide directing secretion. The propeptide occupies E23 to R40. Q41 is subject to Pyrrolidone carboxylic acid. Cystine bridges form between C42–C56, C49–C60, and C55–C67.

It belongs to the conotoxin O1 superfamily. Expressed by the venom duct.

It is found in the secreted. The polypeptide is Conotoxin ArMKLT2-0112 (Conus arenatus (Sand-dusted cone)).